The following is a 155-amino-acid chain: 3-hydroxyacyl-[acyl-carrier-protein] dehydratase FabZ (155 aa).

His-54 is an active-site residue.

Belongs to the thioester dehydratase family. FabZ subfamily.

It localises to the cytoplasm. The enzyme catalyses a (3R)-hydroxyacyl-[ACP] = a (2E)-enoyl-[ACP] + H2O. In terms of biological role, involved in unsaturated fatty acids biosynthesis. Catalyzes the dehydration of short chain beta-hydroxyacyl-ACPs and long chain saturated and unsaturated beta-hydroxyacyl-ACPs. The protein is 3-hydroxyacyl-[acyl-carrier-protein] dehydratase FabZ of Burkholderia ambifaria (strain MC40-6).